We begin with the raw amino-acid sequence, 343 residues long: Ketol-acid reductoisomerase (NADP(+)) (343 aa).

The region spanning 7 to 186 (TTVYYDEDAD…GCTRAGVIET (180 aa)) is the KARI N-terminal Rossmann domain. Residues 30–33 (YGSQ), Arg-53, Ser-56, Ser-58, and 88–91 (DTIQ) each bind NADP(+). Residue His-112 is part of the active site. Residue Gly-138 coordinates NADP(+). A KARI C-terminal knotted domain is found at 187-329 (SFQEEVETDL…ENLRELFAWG (143 aa)). Mg(2+)-binding residues include Asp-195, Glu-199, Glu-231, and Glu-235. Position 256 (Ser-256) interacts with substrate.

It belongs to the ketol-acid reductoisomerase family. Mg(2+) serves as cofactor.

The enzyme catalyses (2R)-2,3-dihydroxy-3-methylbutanoate + NADP(+) = (2S)-2-acetolactate + NADPH + H(+). The catalysed reaction is (2R,3R)-2,3-dihydroxy-3-methylpentanoate + NADP(+) = (S)-2-ethyl-2-hydroxy-3-oxobutanoate + NADPH + H(+). It participates in amino-acid biosynthesis; L-isoleucine biosynthesis; L-isoleucine from 2-oxobutanoate: step 2/4. The protein operates within amino-acid biosynthesis; L-valine biosynthesis; L-valine from pyruvate: step 2/4. Involved in the biosynthesis of branched-chain amino acids (BCAA). Catalyzes an alkyl-migration followed by a ketol-acid reduction of (S)-2-acetolactate (S2AL) to yield (R)-2,3-dihydroxy-isovalerate. In the isomerase reaction, S2AL is rearranged via a Mg-dependent methyl migration to produce 3-hydroxy-3-methyl-2-ketobutyrate (HMKB). In the reductase reaction, this 2-ketoacid undergoes a metal-dependent reduction by NADPH to yield (R)-2,3-dihydroxy-isovalerate. This Haloarcula marismortui (strain ATCC 43049 / DSM 3752 / JCM 8966 / VKM B-1809) (Halobacterium marismortui) protein is Ketol-acid reductoisomerase (NADP(+)).